The chain runs to 238 residues: Nucleoside diphosphate kinase III, chloroplastic/mitochondrial (238 aa).

The transit peptide at 1 to 85 (MSSQICRSAS…YMIQDQEVLA (85 aa)) directs the protein to the chloroplast and mitochondrion. Positions 96, 144, 172, 178, 189, and 199 each coordinate ATP. The active-site Pros-phosphohistidine intermediate is the H202.

Belongs to the NDK family. In terms of assembly, homohexamer. Mg(2+) is required as a cofactor.

The protein resides in the plastid. It localises to the chloroplast thylakoid lumen. It is found in the mitochondrion intermembrane space. It catalyses the reaction a 2'-deoxyribonucleoside 5'-diphosphate + ATP = a 2'-deoxyribonucleoside 5'-triphosphate + ADP. It carries out the reaction a ribonucleoside 5'-diphosphate + ATP = a ribonucleoside 5'-triphosphate + ADP. In terms of biological role, major role in the synthesis of nucleoside triphosphates other than ATP. The ATP gamma phosphate is transferred to the NDP beta phosphate via a ping-pong mechanism, using a phosphorylated active-site intermediate. Shows the highest specificity towards GDP. This is Nucleoside diphosphate kinase III, chloroplastic/mitochondrial (NDPK3) from Arabidopsis thaliana (Mouse-ear cress).